A 212-amino-acid polypeptide reads, in one-letter code: Floral homeotic protein PMADS 2 (212 aa).

The MADS-box domain maps to 3 to 58; sequence RGKIEIKRIENSSNRQVTYSKRRNGIIKKAKEITVLCDAKVSLIIFGNSGKMHEYC. Residues 84–170 enclose the K-box domain; it reads HENLSNEIDR…QYALHQKEMA (87 aa).

As to expression, predominantly expressed in petals and stamens, less in carpels and sepals.

The protein resides in the nucleus. In terms of biological role, transcription factor involved in the genetic control of flower development. This chain is Floral homeotic protein PMADS 2 (PMADS2), found in Petunia hybrida (Petunia).